The following is a 245-amino-acid chain: Ribosomal RNA large subunit methyltransferase E (245 aa).

Residues Gly83, Trp85, Asp111, Asp127, and Asp156 each coordinate S-adenosyl-L-methionine. Lys196 acts as the Proton acceptor in catalysis.

Belongs to the class I-like SAM-binding methyltransferase superfamily. RNA methyltransferase RlmE family.

It localises to the cytoplasm. The enzyme catalyses uridine(2552) in 23S rRNA + S-adenosyl-L-methionine = 2'-O-methyluridine(2552) in 23S rRNA + S-adenosyl-L-homocysteine + H(+). In terms of biological role, specifically methylates the uridine in position 2552 of 23S rRNA at the 2'-O position of the ribose in the fully assembled 50S ribosomal subunit. The polypeptide is Ribosomal RNA large subunit methyltransferase E (Polaromonas naphthalenivorans (strain CJ2)).